A 928-amino-acid chain; its full sequence is Mating-type protein A-alpha Y4 (928 aa).

The homeobox DNA-binding region spans 152 to 211 (GKRSRPKFHSEYTPVLELYFHFNAYPTYADRRILAEKTGMLTRQITVWFQNHRRRAKGPL). Disordered stretches follow at residues 255–296 (KSLA…EAGP), 310–329 (DSVSKKKSKKAKKEKASQQN), 340–359 (TATKEKRRKMKKLPRAAGQP), 406–451 (YAYV…HRVS), and 626–736 (ARRK…EQDL). The span at 344 to 353 (EKRRKMKKLP) shows a compositional bias: basic residues. A compositionally biased stretch (basic and acidic residues) spans 635-657 (KALEEKQAKKDRKERQKASRSQR). Low complexity-rich tracts occupy residues 668-682 (SRASSVASTSSLPAR) and 694-728 (ESAASSRATSVASSVRTPSLSSTSSRRSSGMSMPG).

Its subcellular location is the nucleus. Functionally, specifies A-alpha-4 mating-type. May regulate the expression of genes specific to the homokaryotic cell type. This is Mating-type protein A-alpha Y4 from Schizophyllum commune (Split gill fungus).